We begin with the raw amino-acid sequence, 459 residues long: Plasma alpha-L-fucosidase (459 aa).

The first 23 residues, 1–23 (MRLGLLMFLPLLLLATRYRAVTA), serve as a signal peptide directing secretion. N-linked (GlcNAc...) asparagine glycosylation is found at Asn163 and Asn231. Ser293 bears the Phosphoserine mark. N-linked (GlcNAc...) asparagine glycosylation occurs at Asn369.

It belongs to the glycosyl hydrolase 29 family. As to quaternary structure, homotetramer.

It is found in the secreted. It carries out the reaction an alpha-L-fucoside + H2O = L-fucose + an alcohol. Alpha-L-fucosidase is responsible for hydrolyzing the alpha-1,6-linked fucose joined to the reducing-end N-acetylglucosamine of the carbohydrate moieties of glycoproteins. The protein is Plasma alpha-L-fucosidase (Fuca2) of Rattus norvegicus (Rat).